A 436-amino-acid chain; its full sequence is GTPase Der (436 aa).

EngA-type G domains are found at residues 3–168 (PLIA…PESD) and 177–352 (IRLA…DNRA). Residues 9 to 16 (GRPNVGKS), 56 to 60 (DTGGY), 120 to 123 (NKVE), 183 to 190 (GRPNVGKS), 230 to 234 (DTAGL), and 295 to 298 (NKWD) each bind GTP. One can recognise a KH-like domain in the interval 353–436 (RKISTSALNR…VTISLRFLQK (84 aa)).

It belongs to the TRAFAC class TrmE-Era-EngA-EngB-Septin-like GTPase superfamily. EngA (Der) GTPase family. As to quaternary structure, associates with the 50S ribosomal subunit.

Its function is as follows. GTPase that plays an essential role in the late steps of ribosome biogenesis. The chain is GTPase Der from Chlorobium phaeovibrioides (strain DSM 265 / 1930) (Prosthecochloris vibrioformis (strain DSM 265)).